The primary structure comprises 527 residues: Coiled-coil domain-containing protein 148 (527 aa).

Coiled coils occupy residues leucine 289–lysine 353 and leucine 401–glutamine 438.

This is Coiled-coil domain-containing protein 148 (Ccdc148) from Mus musculus (Mouse).